Here is a 276-residue protein sequence, read N- to C-terminus: MLADIWYPNWWQALVLGMVQGITEFLPISSTAHLRVFPALLGWPDAGASFAAVIQLGSLGAVLIYFASDLRQLLLGSWKAWQKRDFQEESWRLLMGILVGTLPIVIAGWAVKAIWGSPPRQLWVVAAAAIGLALALGWAERVGKRRRDLHSLGIGDGLWVGLAQALALIPGVSRSGVTLTAALLLDLQRSAAARYSFLLGIPALFLAGVAEFIAEFRAEALLSQGLGTLSAFVFSYGSIDWLIRFLQRSSTWVFIVYRIGFGLFIFLGLALGFLQP.

The next 7 helical transmembrane spans lie at 46–66 (AGAS…LIYF), 94–114 (LMGI…VKAI), 122–142 (LWVV…AERV), 152–172 (LGIG…IPGV), 196–216 (SFLL…IAEF), 226–246 (LGTL…IRFL), and 253–273 (VFIV…ALGF).

The protein belongs to the UppP family.

It is found in the cell inner membrane. The catalysed reaction is di-trans,octa-cis-undecaprenyl diphosphate + H2O = di-trans,octa-cis-undecaprenyl phosphate + phosphate + H(+). Its function is as follows. Catalyzes the dephosphorylation of undecaprenyl diphosphate (UPP). Confers resistance to bacitracin. The protein is Undecaprenyl-diphosphatase of Synechococcus sp. (strain JA-3-3Ab) (Cyanobacteria bacterium Yellowstone A-Prime).